Consider the following 1126-residue polypeptide: Translation initiation factor IF-2 (1126 aa).

Positions L63 to A519 are disordered. Positions I70–S83 are enriched in basic and acidic residues. Low complexity predominate over residues P93 to P111. Positions K116–N151 are enriched in polar residues. Positions T161–P171 are enriched in pro residues. Polar residues predominate over residues N181 to I195. 2 stretches are compositionally biased toward low complexity: residues N211–K224 and I240–N252. Positions A254 to G264 are enriched in polar residues. 2 stretches are compositionally biased toward low complexity: residues N291 to N315 and N327 to G349. Basic and acidic residues predominate over residues G429 to R443. Over residues K501 to R517 the composition is skewed to basic residues. Positions R618–L790 constitute a tr-type G domain. Positions G627–T634 are G1. G627 to T634 provides a ligand contact to GTP. Positions G652 to H656 are G2. Residues D677–G680 form a G3 region. GTP is bound by residues D677 to H681 and N731 to D734. Residues N731–D734 are G4. The segment at S767 to I769 is G5.

The protein belongs to the TRAFAC class translation factor GTPase superfamily. Classic translation factor GTPase family. IF-2 subfamily.

It localises to the cytoplasm. Functionally, one of the essential components for the initiation of protein synthesis. Protects formylmethionyl-tRNA from spontaneous hydrolysis and promotes its binding to the 30S ribosomal subunits. Also involved in the hydrolysis of GTP during the formation of the 70S ribosomal complex. This is Translation initiation factor IF-2 from Prochlorococcus marinus (strain AS9601).